Here is a 249-residue protein sequence, read N- to C-terminus: 2,3-bisphosphoglycerate-dependent phosphoglycerate mutase (249 aa).

Residues 8 to 15 (RHGQSAWN), 21 to 22 (TG), R60, 87 to 90 (ERHY), K98, 114 to 115 (RR), and 183 to 184 (GN) each bind substrate. H9 serves as the catalytic Tele-phosphohistidine intermediate. E87 serves as the catalytic Proton donor/acceptor. The tract at residues 115–137 (RSYDTPPPPLPADDPRSPAGDAR) is disordered.

The protein belongs to the phosphoglycerate mutase family. BPG-dependent PGAM subfamily. Homodimer.

The enzyme catalyses (2R)-2-phosphoglycerate = (2R)-3-phosphoglycerate. The protein operates within carbohydrate degradation; glycolysis; pyruvate from D-glyceraldehyde 3-phosphate: step 3/5. Functionally, catalyzes the interconversion of 2-phosphoglycerate and 3-phosphoglycerate. The chain is 2,3-bisphosphoglycerate-dependent phosphoglycerate mutase from Nitratidesulfovibrio vulgaris (strain DSM 19637 / Miyazaki F) (Desulfovibrio vulgaris).